Here is a 314-residue protein sequence, read N- to C-terminus: Protoheme IX farnesyltransferase (314 aa).

The next 8 membrane-spanning stretches (helical) occupy residues 36–56, 65–85, 114–134, 135–155, 179–199, 237–257, 259–279, and 290–310; these read IGIV…AISF, WGTF…GCIV, SVLT…MFTS, WYAT…YTIW, WAAI…IMFI, IIVY…TMGI, FAVI…TGLF, and IFIF…IVKL.

This sequence belongs to the UbiA prenyltransferase family. Protoheme IX farnesyltransferase subfamily. As to quaternary structure, interacts with CtaA.

Its subcellular location is the cell membrane. The enzyme catalyses heme b + (2E,6E)-farnesyl diphosphate + H2O = Fe(II)-heme o + diphosphate. It functions in the pathway porphyrin-containing compound metabolism; heme O biosynthesis; heme O from protoheme: step 1/1. Its function is as follows. Converts heme B (protoheme IX) to heme O by substitution of the vinyl group on carbon 2 of heme B porphyrin ring with a hydroxyethyl farnesyl side group. The polypeptide is Protoheme IX farnesyltransferase (Oceanobacillus iheyensis (strain DSM 14371 / CIP 107618 / JCM 11309 / KCTC 3954 / HTE831)).